We begin with the raw amino-acid sequence, 590 residues long: MKTGRVLKISGPLVVAEGMEEANIYDVVKVGEKRLIGEIIEMREDRASIQVYEETAGLAPGDPVITTGEPLSVELGPGLIEAMFDGIQRPLNAIKAKAGDFITRGVEVHSLDRDRKWHFTPVKKVGDTVEAGDVIGIVQETSIVEHKIMVPYGIKGTIETIEEGDFTVVDTVAKVKDKDKVSDLIMMQKWPVRRGRPYGRKLNPVEPMITGQRVIDTFFPVTKGGTACVPGPFGSGKTVVQHQLAKWADAQIVVYIGCGERGNEMTDVLNEFPELKDPKTGEPLMKRTVLIANTSNMPVAAREASIYTGITIGEYFRDMGYSVALMADSTSRWAEALREMSGRLEEMPGDEGYPAYLGSRAADFYERAGKVLSLGSEGREGALTVIGAVSPPGGDLSEPVTQATLRIVKVFWGLDSQLAYRRHFPAINWLNSYSLYLEKISPWMDENVASDWTALRTRAMSLLQEEANLEEIVRLVGIDALSEKDRLKLEVAKSLREDYLQQNAFHEVDTYASLEKQYKMLKLVLFFYDETQRALNAGIYLKELLDLEVRDKIARAKYISEESIENIDAIFNELSEVIDELISKGGIMNA.

Glycine 231 to threonine 238 is an ATP binding site.

It belongs to the ATPase alpha/beta chains family.

It carries out the reaction ATP + H2O + 4 H(+)(in) = ADP + phosphate + 5 H(+)(out). Produces ATP from ADP in the presence of a proton gradient across the membrane. The V-type alpha chain is a catalytic subunit. The chain is V-type ATP synthase alpha chain from Clostridium botulinum (strain Langeland / NCTC 10281 / Type F).